A 139-amino-acid polypeptide reads, in one-letter code: Holo-[acyl-carrier-protein] synthase (139 aa).

2 residues coordinate Mg(2+): D8 and E57.

It belongs to the P-Pant transferase superfamily. AcpS family. Mg(2+) serves as cofactor.

The protein resides in the cytoplasm. The catalysed reaction is apo-[ACP] + CoA = holo-[ACP] + adenosine 3',5'-bisphosphate + H(+). Transfers the 4'-phosphopantetheine moiety from coenzyme A to a Ser of acyl-carrier-protein. This chain is Holo-[acyl-carrier-protein] synthase, found in Rhizobium meliloti (strain 1021) (Ensifer meliloti).